A 3491-amino-acid chain; its full sequence is Erythronolide synthase EryA1 (3491 aa).

The interval Met1 to Ala484 is loading domain. Residues Val57–Ala372 are acyltransferase 1. Ser145 (acyl-ester intermediate; for acyltransferase 1 activity) is an active-site residue. The segment at Pro386–Arg410 is disordered. A compositionally biased stretch (basic residues) spans Ser391–Ser400. The Carrier 1 domain occupies Arg412 to Thr487. Ser447 carries the O-(pantetheine 4'-phosphoryl)serine modification. The region spanning Gly504–Glu928 is the Ketosynthase family 3 (KS3) 1 domain. Module regions lie at residues Val507 to Ala1958 and Ile1982 to Asp3404. The active-site Acyl-thioester intermediate; for beta-ketoacyl synthase 1 activity is the Cys677. Active-site for beta-ketoacyl synthase 1 activity residues include His812 and His850. Residues Val1031–Val1352 are acyltransferase 2. The Acyl-ester intermediate; for acyltransferase 2 activity role is filled by Ser1128. The beta-ketoacyl reductase 1 stretch occupies residues Gly1613–Ala1790. NADP(+) is bound by residues Thr1621–Val1624, Ser1644–Gly1647, Asp1673–Val1674, Lys1723, and Phe1745–Ser1746. Tyr1760 acts as the For beta-ketoacyl reductase 1 activity in catalysis. Positions Glu1886 to Leu1961 constitute a Carrier 2 domain. The residue at position 1921 (Ser1921) is an O-(pantetheine 4'-phosphoryl)serine. The Ketosynthase family 3 (KS3) 2 domain maps to Asp1979–Glu2402. The Acyl-thioester intermediate; for beta-ketoacyl synthase 2 activity role is filled by Cys2148. Residues His2283 and His2323 each act as for beta-ketoacyl synthase 2 activity in the active site. The interval Val2508–Ala2827 is acyltransferase 3. Ser2598 serves as the catalytic Acyl-ester intermediate; for acyltransferase 3 activity. The beta-ketoacyl reductase 2 stretch occupies residues Gly3057–Ala3233. NADP(+) contacts are provided by residues Thr3065 to Leu3068, Ser3088 to Gly3091, Asp3117 to Val3118, Lys3168, and Phe3188 to Ser3189. The active-site For beta-ketoacyl reductase 2 activity is Tyr3203. The Carrier 3 domain maps to Glu3329–Leu3407. Ser3367 carries the post-translational modification O-(pantetheine 4'-phosphoryl)serine. A disordered region spans residues Gln3456–Asp3491. Over residues Asp3471 to Leu3481 the composition is skewed to acidic residues.

In terms of assembly, homodimer. Erythronolide synthase is composed of EryAI, EryAII and EryAIII multimodular (2 modules) polypeptides each coding for a functional synthase subunit which participates in 2 of the six FAS-like elongation steps required for formation of the polyketide. Module 1, 2, 3, 4, 5, and 6 participating in biosynthesis steps 1, 2, 3, 4, 5, and 6, respectively. It depends on pantetheine 4'-phosphate as a cofactor.

The enzyme catalyses 6 (S)-methylmalonyl-CoA + propanoyl-CoA + 6 NADPH + 12 H(+) = 6-deoxyerythronolide B + 6 CO2 + 6 NADP(+) + 7 CoA + H2O. Its pathway is antibiotic biosynthesis; erythromycin biosynthesis. Its function is as follows. Involved in the biosynthesis of antibiotic erythromycin via the biosynthesis of its aglycone precursor, 6-deoxyerythronolide B (6-dEB). In Saccharopolyspora erythraea (Streptomyces erythraeus), this protein is Erythronolide synthase EryA1 (eryA).